A 672-amino-acid polypeptide reads, in one-letter code: Glycine--tRNA ligase beta subunit (672 aa).

The protein belongs to the class-II aminoacyl-tRNA synthetase family. Tetramer of two alpha and two beta subunits.

Its subcellular location is the cytoplasm. The catalysed reaction is tRNA(Gly) + glycine + ATP = glycyl-tRNA(Gly) + AMP + diphosphate. In Thermotoga sp. (strain RQ2), this protein is Glycine--tRNA ligase beta subunit.